A 97-amino-acid polypeptide reads, in one-letter code: Large ribosomal subunit protein uL23 (97 aa).

Belongs to the universal ribosomal protein uL23 family. In terms of assembly, part of the 50S ribosomal subunit. Contacts protein L29, and trigger factor when it is bound to the ribosome.

One of the early assembly proteins it binds 23S rRNA. One of the proteins that surrounds the polypeptide exit tunnel on the outside of the ribosome. Forms the main docking site for trigger factor binding to the ribosome. The protein is Large ribosomal subunit protein uL23 of Clostridium perfringens (strain SM101 / Type A).